The chain runs to 714 residues: MSIHSVECNVGTNPITIETGKMARLADGAVVVRSGDTVVLVTVVSATKVKEGQTFFPLSVEYKEKAAAAGMFPGGYFKREGRPTEKEILTCRMTDRPLRPMFPKGYFYDTQVITLLLSADGENEPDILSINGASAACVVSDLPFAEPVGAVRVGRIDGQFVINPTNSQREHSQLDLVFAGTKDQVIMIEGSANELPEEDFIAALRVAQENVKVICEKQEELRAVCGKEKRAYELCLAKPELLEIGYEIAGDRIEEAIYAPSKVERQKKVGALRDEVEAAIKERHPEATDFDVEQVFEYIQKKAFRISIMEKDKRADGRALKQLRPLTAEVNVLPPVVHGSAMFARGETMSLCLATLAPMEERQYMDNYTGSVNEKRFILHYNFPPFSVGDTGRFGGQNRREIGHGALAERSIAPVVPGEQEFPYAIRVSSEIMESNGSTSMASVCAGTMSLLAAGVPLKRPVAGISVGLVTEQNDQHEITSYKTLLDIIGSEDFYGDMDFKLCGTSEGVTGYQLDLKLPGIPLSILEEAIHVAKAGRTDVLKVMNEAIAAPAQMSPNAPRIETTKIPADRIGELIGPGGKNIKAIQAESGADINIEEDGTVHIYAAKQEGLDRALELVTRMFKTIEIGELYTGKIVSTTTFGAFMEVLPGKDGLIHISELAEGRTAKTEDVVSVGDVVTAKCIGIDDKGRVKMSIRAALRDAKAAEAEAAGITE.

2 residues coordinate Mg(2+): Asp493 and Asp499. In terms of domain architecture, KH spans 559 to 618 (PRIETTKIPADRIGELIGPGGKNIKAIQAESGADINIEEDGTVHIYAAKQEGLDRALELV). One can recognise an S1 motif domain in the interval 628–696 (GELYTGKIVS…DKGRVKMSIR (69 aa)).

Belongs to the polyribonucleotide nucleotidyltransferase family. Mg(2+) serves as cofactor.

Its subcellular location is the cytoplasm. It catalyses the reaction RNA(n+1) + phosphate = RNA(n) + a ribonucleoside 5'-diphosphate. In terms of biological role, involved in mRNA degradation. Catalyzes the phosphorolysis of single-stranded polyribonucleotides processively in the 3'- to 5'-direction. This Akkermansia muciniphila (strain ATCC BAA-835 / DSM 22959 / JCM 33894 / BCRC 81048 / CCUG 64013 / CIP 107961 / Muc) protein is Polyribonucleotide nucleotidyltransferase.